A 957-amino-acid chain; its full sequence is Glycine dehydrogenase (decarboxylating) (957 aa).

The residue at position 708 (Lys708) is an N6-(pyridoxal phosphate)lysine.

It belongs to the GcvP family. As to quaternary structure, the glycine cleavage system is composed of four proteins: P, T, L and H. Pyridoxal 5'-phosphate is required as a cofactor.

It catalyses the reaction N(6)-[(R)-lipoyl]-L-lysyl-[glycine-cleavage complex H protein] + glycine + H(+) = N(6)-[(R)-S(8)-aminomethyldihydrolipoyl]-L-lysyl-[glycine-cleavage complex H protein] + CO2. Its function is as follows. The glycine cleavage system catalyzes the degradation of glycine. The P protein binds the alpha-amino group of glycine through its pyridoxal phosphate cofactor; CO(2) is released and the remaining methylamine moiety is then transferred to the lipoamide cofactor of the H protein. This Shigella boydii serotype 18 (strain CDC 3083-94 / BS512) protein is Glycine dehydrogenase (decarboxylating).